Reading from the N-terminus, the 177-residue chain is MTSRDCTGLSEFLGHGSDSCDSGSGSLGSLSYVQCVNLLSDLKSLGYQSIDSILYILGGGEAERFEIYRIFRRHGIGIGEALQLGVKKSLCNSPRSLLAILDDLLSRLGRGSAFLPSDLGAVKGELVATFHSSRLSVDLYVNNKKVVTRSVQAEGDYSYVARRFSGYKGLILRATRY.

This is an uncharacterized protein from Grapevine virus A (isolate Is 151) (GVA).